Consider the following 623-residue polypeptide: Glutamine--fructose-6-phosphate aminotransferase [isomerizing] (623 aa).

The active-site Nucleophile; for GATase activity is the Cys2. Residues 2–228 (CGIVGYIGQA…NDQVVTITAD (227 aa)) enclose the Glutamine amidotransferase type-2 domain. 2 consecutive SIS domains span residues 295–435 (IDEA…LRGN) and 468–613 (LGQD…VDQP). The active-site For Fru-6P isomerization activity is the Lys618.

Homodimer.

The protein resides in the cytoplasm. It carries out the reaction D-fructose 6-phosphate + L-glutamine = D-glucosamine 6-phosphate + L-glutamate. In terms of biological role, catalyzes the first step in hexosamine metabolism, converting fructose-6P into glucosamine-6P using glutamine as a nitrogen source. The sequence is that of Glutamine--fructose-6-phosphate aminotransferase [isomerizing] from Corynebacterium glutamicum (strain ATCC 13032 / DSM 20300 / JCM 1318 / BCRC 11384 / CCUG 27702 / LMG 3730 / NBRC 12168 / NCIMB 10025 / NRRL B-2784 / 534).